Reading from the N-terminus, the 132-residue chain is Small ribosomal subunit protein uS8 (132 aa).

This sequence belongs to the universal ribosomal protein uS8 family. In terms of assembly, part of the 30S ribosomal subunit. Contacts proteins S5 and S12.

Functionally, one of the primary rRNA binding proteins, it binds directly to 16S rRNA central domain where it helps coordinate assembly of the platform of the 30S subunit. The sequence is that of Small ribosomal subunit protein uS8 from Rhodospirillum centenum (strain ATCC 51521 / SW).